A 954-amino-acid chain; its full sequence is Alpha-xylosidase BoGH31A (954 aa).

Residues 1 to 20 (MIMNMKNIFYCLLPGLLLGA) form the signal peptide. C21 carries N-palmitoyl cysteine lipidation. The S-diacylglycerol cysteine moiety is linked to residue C21. Residues 227–366 (TGQEGALTGT…NPEEQGKQSW (140 aa)) enclose the PA14 domain. Active-site residues include D553 and E556. Residue D630 is the Proton donor of the active site.

Belongs to the glycosyl hydrolase 31 family.

The protein localises to the cell inner membrane. The catalysed reaction is Hydrolysis of terminal, non-reducing alpha-D-xylose residues with release of alpha-D-xylose.. Its pathway is glucan metabolism; xyloglucan degradation. Functionally, catalyzes the liberation of alpha-xylose from the non-reducing terminal glucose of xyloglucan oligosaccharides in xyloglucan degradation, converting the 'X' to 'G' units. This is Alpha-xylosidase BoGH31A from Bacteroides ovatus (strain ATCC 8483 / DSM 1896 / JCM 5824 / BCRC 10623 / CCUG 4943 / NCTC 11153).